A 309-amino-acid polypeptide reads, in one-letter code: Serpentine receptor class gamma-47 (309 aa).

Transmembrane regions (helical) follow at residues 22–42 (IVQM…LFLF), 140–160 (FKLY…VLPL), 190–210 (IYSS…IFYI), 230–250 (LITL…ILMA), and 272–292 (ISSD…DVGI).

Belongs to the nematode receptor-like protein srg family.

Its subcellular location is the membrane. The polypeptide is Serpentine receptor class gamma-47 (srg-47) (Caenorhabditis elegans).